Reading from the N-terminus, the 611-residue chain is Histone acetyltransferase KAT7 (611 aa).

A disordered region spans residues 1–173 (MPRRKRNAGS…SDLSHRPKRR (173 aa)). At Ser-10 the chain carries Phosphoserine. The segment covering 42 to 57 (VTRSSARLSQSSQDSS) has biased composition (low complexity). Phosphoserine; by ATR is present on residues Ser-50 and Ser-53. Ser-57 carries the phosphoserine; by PLK1 modification. Position 64 is a phosphoserine (Ser-64). A phosphothreonine; by CDK1 mark is found at Thr-85 and Thr-88. Residues 96–105 (QTRSSGSETE) show a composition bias toward polar residues. Position 102 is a phosphoserine (Ser-102). Thr-104 is modified (phosphothreonine). Over residues 110-125 (FSDRETKNTADHDESP) the composition is skewed to basic and acidic residues. 2 positions are modified to phosphoserine: Ser-111 and Ser-124. The residue at position 128 (Thr-128) is a Phosphothreonine. Residues 134-145 (PSSESDIDISSP) show a composition bias toward low complexity. The span at 148–168 (SHDESIAKDMSLKDSGSDLSH) shows a compositional bias: basic and acidic residues. Phosphoserine occurs at positions 158, 162, 164, and 178. Residues 176 to 219 (HESYNFNMKCPTPGCNSLGHLTGKHERHFSISGCPLYHNLSADE) form a CCHHC-type zinc finger. 2 positions are modified to N6-acetyllysine: Lys-199 and Lys-277. A Glycyl lysine isopeptide (Lys-Gly) (interchain with G-Cter in SUMO2) cross-link involves residue Lys-323. Residues 332–607 (EGSNMIKTIA…MDPSCLKWTP (276 aa)) form the MYST-type HAT domain. A Glycyl lysine isopeptide (Lys-Gly) (interchain with G-Cter in ubiquitin) cross-link involves residue Lys-338. A C2HC MYST-type zinc finger spans residues 365-390 (LYMCEFCLKYMKSQTILRRHMAKCVW). Zn(2+) is bound by residues Cys-368, Cys-371, His-384, and Cys-388. Lys-432 is modified (N6-acetyllysine; by autocatalysis). Acetyl-CoA is bound by residues 475–477 (ILT) and 483–488 (RQGYGK). The residue at position 506 (Ser-506) is a Phosphoserine. Glu-508 functions as the Proton donor/acceptor in the catalytic mechanism. Acetyl-CoA-binding residues include Ser-512 and Ser-521.

This sequence belongs to the MYST (SAS/MOZ) family. Component of the HBO1 complex composed of KAT7/HBO1, MEAF6, ING4 or ING5, and one scaffold subunit: complexes containing BRPF scaffold (BRPF1, BRD1/BRPF2 or BRPF3) direct KAT7/HBO1 specificity towards H3K14ac, while complexes containing JADE scaffold (JADE1, JADE2 and JADE3) mediate acetylation of histone H4. Interacts with MCM2 and ORC1. Interacts with the androgen receptor (AR); in the presence of dihydrotestosterone. Interacts with CDT1. Interacts with MAP2K1 and CUL1. Interacts with p53/TP53; leading to inhibit histone acetyltransferase activity. Interacts with MIS18BP1. Phosphorylated at Ser-50 and Ser-53 by ATR in response to DNA damage, promoting its ubiquitination by the CRL4(DDB2) complex and subsequent degradation. Phosphorylation at Ser-50 and Ser-53 by ATR in response to ultraviolet-induced DNA, promotes localization to DNA damage sites. Phosphorylation at Ser-57 by PLK1 during mitosis seems important for prereplicative complex formation and DNA replication licensing, and requires prior phosphorylation at Thr-85 and Thr-88 by CDK1. Phosphorylated by MAP2K1, which accelerates its degradation. In terms of processing, ubiquitinated at Lys-338, leading to proteasomal degradation. Ubiquitinated by the CRL4(DDB2) complex following phosphorylation by ATR, leading to its subsequent degradation. Post-translationally, autoacetylation at Lys-432 is required for proper function. Ubiquitously expressed, with highest levels in testis.

The protein resides in the nucleus. The protein localises to the chromosome. It is found in the centromere. Its subcellular location is the cytoplasm. It localises to the cytosol. It carries out the reaction L-lysyl-[histone] + acetyl-CoA = N(6)-acetyl-L-lysyl-[histone] + CoA + H(+). Histone acetyltransferase activity is inhibited by GMNN in the context of a complex with CDT1, inhibiting histone H4 acetylation and DNA replication licensing. Selectively inhibited by WM-3835 (N'-(4-fluoro-5-methyl-[1,1'-biphenyl]-3-carbonyl)-3- hydroxybenzenesulfonohydrazide) inhibitor. Its function is as follows. Catalytic subunit of histone acetyltransferase HBO1 complexes, which specifically mediate acetylation of histone H3 at 'Lys-14' (H3K14ac), thereby regulating various processes, such as gene transcription, protein ubiquitination, immune regulation, stem cell pluripotent and self-renewal maintenance and embryonic development. Some complexes also catalyze acetylation of histone H4 at 'Lys-5', 'Lys-8' and 'Lys-12' (H4K5ac, H4K8ac and H4K12ac, respectively), regulating DNA replication initiation, regulating DNA replication initiation. Specificity of the HBO1 complexes is determined by the scaffold subunit: complexes containing BRPF scaffold (BRPF1, BRD1/BRPF2 or BRPF3) direct KAT7/HBO1 specificity towards H3K14ac, while complexes containing JADE (JADE1, JADE2 and JADE3) scaffold direct KAT7/HBO1 specificity towards histone H4. H3K14ac promotes transcriptional elongation by facilitating the processivity of RNA polymerase II. Acts as a key regulator of hematopoiesis by forming a complex with BRD1/BRPF2, directing KAT7/HBO1 specificity towards H3K14ac and promoting erythroid differentiation. H3K14ac is also required for T-cell development. KAT7/HBO1-mediated acetylation facilitates two consecutive steps, licensing and activation, in DNA replication initiation: H3K14ac facilitates the activation of replication origins, and histone H4 acetylation (H4K5ac, H4K8ac and H4K12ac) facilitates chromatin loading of MCM complexes, promoting DNA replication licensing. Acts as a positive regulator of centromeric CENPA assembly: recruited to centromeres and mediates histone acetylation, thereby preventing centromere inactivation mediated by SUV39H1, possibly by increasing histone turnover/exchange. Involved in nucleotide excision repair: phosphorylation by ATR in response to ultraviolet irradiation promotes its localization to DNA damage sites, where it mediates histone acetylation to facilitate recruitment of XPC at the damaged DNA sites. Acts as an inhibitor of NF-kappa-B independently of its histone acetyltransferase activity. Plays a central role in the maintenance of leukemia stem cells in acute myeloid leukemia (AML). Acts by mediating acetylation of histone H3 at 'Lys-14' (H3K14ac), thereby facilitating the processivity of RNA polymerase II to maintain the high expression of key genes, such as HOXA9 and HOXA10 that help to sustain the functional properties of leukemia stem cells. In Homo sapiens (Human), this protein is Histone acetyltransferase KAT7.